We begin with the raw amino-acid sequence, 688 residues long: Chaperone protein dnaK1 (688 aa).

At Thr198 the chain carries Phosphothreonine; by autocatalysis. Residues 630 to 661 (DLPRDSYRERDAYNNRDYGRDYGRDYGRDSRP) show a composition bias toward basic and acidic residues. The interval 630–688 (DLPRDSYRERDAYNNRDYGRDYGRDYGRDSRPSYDNSRPPRKSPRPSYQDNWDDDDDWL) is disordered.

Belongs to the heat shock protein 70 family.

Its function is as follows. Acts as a chaperone. In Nostoc sp. (strain PCC 7120 / SAG 25.82 / UTEX 2576), this protein is Chaperone protein dnaK1 (dnaK1).